A 353-amino-acid polypeptide reads, in one-letter code: Inactive ubiquitin thioesterase OTULINL (353 aa).

Residues 1 to 80 (MEAPRSAPRE…KWWIGYLQRK (80 aa)) form a required for membrane binding region. The region spanning 125-353 (KCVRAVKRDN…NGHHYHIPVF (229 aa)) is the OTU domain.

Belongs to the peptidase C65 family. Otulin subfamily. As to quaternary structure, does not bind ubiquitin or ubiquitin-like proteins.

The protein resides in the cytoplasm. It localises to the endoplasmic reticulum membrane. It is found in the nucleus envelope. In terms of biological role, lacks deubiquitinase activity. In Mus musculus (Mouse), this protein is Inactive ubiquitin thioesterase OTULINL.